The sequence spans 119 residues: Large ribosomal subunit protein bL20 (119 aa).

This sequence belongs to the bacterial ribosomal protein bL20 family.

Functionally, binds directly to 23S ribosomal RNA and is necessary for the in vitro assembly process of the 50S ribosomal subunit. It is not involved in the protein synthesizing functions of that subunit. This chain is Large ribosomal subunit protein bL20, found in Shouchella clausii (strain KSM-K16) (Alkalihalobacillus clausii).